The following is a 136-amino-acid chain: Frataxin, mitochondrial (136 aa).

Belongs to the frataxin family. In terms of assembly, monomer. Oligomer.

It is found in the mitochondrion. The catalysed reaction is 4 Fe(2+) + O2 + 4 H(+) = 4 Fe(3+) + 2 H2O. Its function is as follows. Promotes the biosynthesis of heme as well as the assembly and repair of iron-sulfur clusters by delivering Fe(2+) to proteins involved in these pathways. May play a role in the protection against iron-catalyzed oxidative stress through its ability to catalyze the oxidation of Fe(2+) to Fe(3+). May be able to store large amounts of the metal in the form of a ferrihydrite mineral by oligomerization. This is Frataxin, mitochondrial (frh-1) from Caenorhabditis elegans.